Consider the following 251-residue polypeptide: Probable transcriptional regulatory protein AAur_2300 (251 aa).

Belongs to the TACO1 family.

It localises to the cytoplasm. This chain is Probable transcriptional regulatory protein AAur_2300, found in Paenarthrobacter aurescens (strain TC1).